The primary structure comprises 387 residues: Patatin group J-1 (387 aa).

The N-terminal stretch at M1 to A23 is a signal peptide. The PNPLA domain occupies L32–L230. A GXGXXG motif is present at residues G36–G41. The GXSXG motif lies at G75–G79. The Nucleophile role is filled by S77. N115 carries N-linked (GlcNAc...) asparagine glycosylation. The active-site Proton acceptor is the D216. The DGA/G motif lies at D216 to G218. Residues E322–A385 adopt a coiled-coil conformation.

It belongs to the patatin family. In terms of tissue distribution, tuber.

The protein localises to the vacuole. In terms of biological role, probable lipolytic acyl hydrolase (LAH), an activity which is thought to be involved in the response of tubers to pathogens. This chain is Patatin group J-1, found in Solanum tuberosum (Potato).